The sequence spans 636 residues: Asparagine synthetase domain-containing protein 1 (636 aa).

Cysteine 2 acts as the Nucleophile in catalysis. The Glutamine amidotransferase type-2 domain maps to 2–187 (CGICCVVALS…ASGIFKMDLR (186 aa)). The region spanning 291–607 (QFIDVLDEAV…GLEAASILPK (317 aa)) is the Asparagine synthetase domain.

The polypeptide is Asparagine synthetase domain-containing protein 1 (ASNSD1) (Gallus gallus (Chicken)).